The sequence spans 305 residues: Glycine--tRNA ligase alpha subunit (305 aa).

This sequence belongs to the class-II aminoacyl-tRNA synthetase family. In terms of assembly, tetramer of two alpha and two beta subunits.

The protein resides in the cytoplasm. It carries out the reaction tRNA(Gly) + glycine + ATP = glycyl-tRNA(Gly) + AMP + diphosphate. This chain is Glycine--tRNA ligase alpha subunit, found in Streptococcus pneumoniae (strain Hungary19A-6).